Consider the following 70-residue polypeptide: DNA-directed RNA polymerase subunit epsilon (70 aa).

It belongs to the RNA polymerase subunit epsilon family. As to quaternary structure, RNAP is composed of a core of 2 alpha, a beta and a beta' subunit. The core is associated with a delta subunit, and at least one of epsilon or omega. When a sigma factor is associated with the core the holoenzyme is formed, which can initiate transcription.

The enzyme catalyses RNA(n) + a ribonucleoside 5'-triphosphate = RNA(n+1) + diphosphate. In terms of biological role, a non-essential component of RNA polymerase (RNAP). The chain is DNA-directed RNA polymerase subunit epsilon from Bacillus cereus (strain ATCC 14579 / DSM 31 / CCUG 7414 / JCM 2152 / NBRC 15305 / NCIMB 9373 / NCTC 2599 / NRRL B-3711).